Here is a 218-residue protein sequence, read N- to C-terminus: Dual specificity protein phosphatase TpbA (218 aa).

Residues 1–28 (MHRSPLAWLRLLLAAVLGAFLLGGPLHA) form the signal peptide. The Tyrosine-protein phosphatase domain occupies 44 to 188 (DPSINLYRMS…YVRGADVDGL (145 aa)). The Proton donor/acceptor role is filled by Asp105. The Phosphocysteine intermediate role is filled by Cys132.

It belongs to the protein-tyrosine phosphatase family.

It is found in the periplasm. It catalyses the reaction O-phospho-L-tyrosyl-[protein] + H2O = L-tyrosyl-[protein] + phosphate. It carries out the reaction O-phospho-L-threonyl-[protein] + H2O = L-threonyl-[protein] + phosphate. The enzyme catalyses O-phospho-L-seryl-[protein] + H2O = L-seryl-[protein] + phosphate. Its function is as follows. Phosphatase that regulates diverse phenotypes in P.aeruginosa via regulation of the concentration of cellular c-di-GMP. Acts by dephosphorylating the membrane-anchored diguanylate cyclase TpbB at tyrosine and serine/threonine sites, leading to inactivation of TpbB and reduced c-di-GMP production. In vitro shows phosphatase activity toward p-nitrophenyl phosphate (pNPP) and tyrosine phosphopeptides. Can efficiently dephosphorylate two phosphorylated peptides derived from the periplasmic domain of TpbB, with a strong preference for Tyr-48 over Tyr-62. The polypeptide is Dual specificity protein phosphatase TpbA (Pseudomonas aeruginosa (strain ATCC 15692 / DSM 22644 / CIP 104116 / JCM 14847 / LMG 12228 / 1C / PRS 101 / PAO1)).